Consider the following 1013-residue polypeptide: Prominin-like protein (1013 aa).

Residues 32–52 (IAYLAICGLSVAIFGFALATL) form a helical membrane-spanning segment. N-linked (GlcNAc...) asparagine glycans are attached at residues Asn99 and Asn116. The next 3 helical transmembrane spans lie at 215 to 235 (CGIC…IAFV), 489 to 509 (VVSL…IFAL), and 535 to 555 (LLLA…VGLF). Asn576, Asn618, Asn803, and Asn824 each carry an N-linked (GlcNAc...) asparagine glycan. Residues 852–872 (INGFWVGILLCALLFLPILFV) traverse the membrane as a helical segment. The interval 918–1013 (ANVPKKRRKA…YYYPGASEQD (96 aa)) is disordered. N-linked (GlcNAc...) asparagine glycosylation occurs at Asn949. Gly residues predominate over residues 950–963 (RSGGDRGGGGGDGA).

The protein belongs to the prominin family.

Its subcellular location is the membrane. The chain is Prominin-like protein from Drosophila melanogaster (Fruit fly).